Consider the following 264-residue polypeptide: S-adenosylmethionine decarboxylase proenzyme (264 aa).

Ser-114 acts as the Schiff-base intermediate with substrate; via pyruvic acid in catalysis. The residue at position 114 (Ser-114) is a Pyruvic acid (Ser); by autocatalysis. Catalysis depends on His-119, which acts as the Proton acceptor; for processing activity. Cys-142 functions as the Proton donor; for catalytic activity in the catalytic mechanism.

This sequence belongs to the prokaryotic AdoMetDC family. Type 2 subfamily. As to quaternary structure, heterooctamer of four alpha and four beta chains arranged as a tetramer of alpha/beta heterodimers. The cofactor is pyruvate. Post-translationally, is synthesized initially as an inactive proenzyme. Formation of the active enzyme involves a self-maturation process in which the active site pyruvoyl group is generated from an internal serine residue via an autocatalytic post-translational modification. Two non-identical subunits are generated from the proenzyme in this reaction, and the pyruvate is formed at the N-terminus of the alpha chain, which is derived from the carboxyl end of the proenzyme. The post-translation cleavage follows an unusual pathway, termed non-hydrolytic serinolysis, in which the side chain hydroxyl group of the serine supplies its oxygen atom to form the C-terminus of the beta chain, while the remainder of the serine residue undergoes an oxidative deamination to produce ammonia and the pyruvoyl group blocking the N-terminus of the alpha chain.

The enzyme catalyses S-adenosyl-L-methionine + H(+) = S-adenosyl 3-(methylsulfanyl)propylamine + CO2. It participates in amine and polyamine biosynthesis; S-adenosylmethioninamine biosynthesis; S-adenosylmethioninamine from S-adenosyl-L-methionine: step 1/1. Its function is as follows. Catalyzes the decarboxylation of S-adenosylmethionine to S-adenosylmethioninamine (dcAdoMet), the propylamine donor required for the synthesis of the polyamines spermine and spermidine from the diamine putrescine. In Chromohalobacter salexigens (strain ATCC BAA-138 / DSM 3043 / CIP 106854 / NCIMB 13768 / 1H11), this protein is S-adenosylmethionine decarboxylase proenzyme.